We begin with the raw amino-acid sequence, 221 residues long: Sugar transporter SWEET1 (221 aa).

Transmembrane regions (helical) follow at residues 3–23 (AGGVADSFLSSACVLFTLGMF), 43–63 (QFLPFLTTDVNNLSWLSYGVL), 68–88 (TLIIVNSVGAVLQTLYILAYL), 102–122 (ATLLAVLLLGYGYFWLLVPDL), 129–149 (LGLFCSVFTISMYLSPLADLA), 160–180 (LSFSLTIATLFCSASWSIYGF), and 186–206 (YITVPNLPGILTSLIRLGLFC). One can recognise a MtN3/slv 1 domain in the interval 10 to 94 (FLSSACVLFT…LAYLHYSPQK (85 aa)). A MtN3/slv 2 domain is found at 127–212 (QQLGLFCSVF…GLFCKYPPEQ (86 aa)). Residues 149–221 (AKIVQTKSTQ…QDRKYRLLQT (73 aa)) form a mediates interaction with TRPV2 region.

This sequence belongs to the SWEET sugar transporter family. Interacts with TRPV2; the interaction probably occurs intracellularly and depends on TRPV2 N-glycosylation. In terms of tissue distribution, expressed at high levels in lung, placenta, spleen and thymus, at intermediate levels in brain, heart, kidney and testis, and at low levels in bone marrow, liver and lymph node. Within the thymus expression is highest in non-lymphoid cells.

The protein localises to the golgi apparatus membrane. The protein resides in the cell membrane. Its function is as follows. Mediates sugar transport across membranes. May regulate the expression of RAG1 a gene involved in V(D)J recombination. This Mus musculus (Mouse) protein is Sugar transporter SWEET1 (Slc50a1).